A 195-amino-acid chain; its full sequence is Ras-related protein Rab-31 (195 aa).

Positions 16, 18, 19, 20, 21, 32, and 33 each coordinate GTP. S20 contacts Mg(2+). 2 short sequence motifs (switch) span residues 30–42 (HFDH…IGAS) and 63–79 (AGQE…YRGS). S36 bears the Phosphoserine mark. T38, G64, N119, D122, A150, and K151 together coordinate GTP. Residue T38 participates in Mg(2+) binding. A disordered region spans residues 168 to 195 (PPLGPQENGNSGGIKLGNQSLQASRRCC). The span at 184–195 (GNQSLQASRRCC) shows a compositional bias: polar residues. 2 S-geranylgeranyl cysteine lipidation sites follow: C194 and C195.

This sequence belongs to the small GTPase superfamily. Rab family. Interacts with OCRL. Interacts (in GDP-bound form) with RIN3 and GAPVD1, which function as guanine exchange factors (GEF). Interacts with EGFR. Interacts with NGFR. Interacts (in GTP-bound form) with EEA1. Interacts (in GTP-bound form) with APPL2; interaction contributes to or enhances recruitment of APPL2 to the phagosomes; interaction enhances Fc-gamma receptor-mediated phagocytosis through PI3K/Akt signaling in macrophages. Mg(2+) is required as a cofactor. Detected in brain astrocytes (at protein level).

Its subcellular location is the early endosome. The protein localises to the golgi apparatus. It is found in the trans-Golgi network. The protein resides in the trans-Golgi network membrane. It localises to the cytoplasmic vesicle. Its subcellular location is the phagosome. The protein localises to the phagosome membrane. It carries out the reaction GTP + H2O = GDP + phosphate + H(+). Its activity is regulated as follows. Regulated by guanine nucleotide exchange factors (GEFs) including RIN3 and GAPVD1 which promote the exchange of bound GDP for free GTP. Regulated by GTPase activating proteins (GAPs) which increase the GTP hydrolysis activity. Inhibited by GDP dissociation inhibitors (GDIs) which prevent Rab-GDP dissociation. Its function is as follows. The small GTPases Rab are key regulators of intracellular membrane trafficking, from the formation of transport vesicles to their fusion with membranes. Rabs cycle between an inactive GDP-bound form and an active GTP-bound form that is able to recruit to membranes different set of downstream effectors directly responsible for vesicle formation, movement, tethering and fusion. Required for the integrity and for normal function of the Golgi apparatus and the trans-Golgi network. Plays a role in insulin-stimulated translocation of GLUT4 to the cell membrane. Plays a role in the maturation of phagosomes that engulf pathogens, such as S.aureus and Mycobacterium. Plays a role in M6PR transport from the trans-Golgi network to endosomes. Plays a role in the internalization of EGFR from the cell membrane into endosomes. The polypeptide is Ras-related protein Rab-31 (Mus musculus (Mouse)).